Here is a 420-residue protein sequence, read N- to C-terminus: Sulfate adenylyltransferase (420 aa).

Belongs to the sulfate adenylyltransferase family.

The catalysed reaction is sulfate + ATP + H(+) = adenosine 5'-phosphosulfate + diphosphate. It participates in sulfur metabolism; hydrogen sulfide biosynthesis; sulfite from sulfate: step 1/3. The sequence is that of Sulfate adenylyltransferase from Desulforudis audaxviator (strain MP104C).